Consider the following 92-residue polypeptide: Small ribosomal subunit protein uS19c (92 aa).

It belongs to the universal ribosomal protein uS19 family.

It is found in the plastid. Protein S19 forms a complex with S13 that binds strongly to the 16S ribosomal RNA. The protein is Small ribosomal subunit protein uS19c of Cuscuta reflexa (Southern Asian dodder).